Consider the following 129-residue polypeptide: Small ribosomal subunit protein uS11 (129 aa).

Residues 108–129 form a disordered region; the sequence is EDVTPIPHDGTKPKGGKRGRRV.

The protein belongs to the universal ribosomal protein uS11 family. In terms of assembly, part of the 30S ribosomal subunit.

In terms of biological role, located on the platform of the 30S subunit. This chain is Small ribosomal subunit protein uS11, found in Methanothrix thermoacetophila (strain DSM 6194 / JCM 14653 / NBRC 101360 / PT) (Methanosaeta thermophila).